The following is a 61-amino-acid chain: MALKITQVKGTIGTKPKHRDNLRSLGLKRIRHSVVRPDTPEVRGMVQAVRHLIVVEEVAGE.

This sequence belongs to the universal ribosomal protein uL30 family. In terms of assembly, part of the 50S ribosomal subunit.

The polypeptide is Large ribosomal subunit protein uL30 (Corynebacterium efficiens (strain DSM 44549 / YS-314 / AJ 12310 / JCM 11189 / NBRC 100395)).